The primary structure comprises 329 residues: tRNA(Ile)-lysidine synthase, chloroplastic (329 aa).

Position 32–37 (32–37 (SGGQDS)) interacts with ATP.

It belongs to the tRNA(Ile)-lysidine synthase family.

The protein resides in the plastid. It localises to the chloroplast. It carries out the reaction cytidine(34) in tRNA(Ile2) + L-lysine + ATP = lysidine(34) in tRNA(Ile2) + AMP + diphosphate + H(+). Ligates lysine onto the cytidine present at position 34 of the AUA codon-specific tRNA(Ile) that contains the anticodon CAU, in an ATP-dependent manner. Cytidine is converted to lysidine, thus changing the amino acid specificity of the tRNA from methionine to isoleucine. In Pyropia yezoensis (Susabi-nori), this protein is tRNA(Ile)-lysidine synthase, chloroplastic.